We begin with the raw amino-acid sequence, 142 residues long: Hemoglobin subunit beta (142 aa).

The 140-residue stretch at 3 to 142 (KLSEDQEHYI…VAEALSSNYH (140 aa)) folds into the Globin domain. Residues His60 and His89 each coordinate heme b.

Belongs to the globin family. In terms of assembly, heterotetramer of two alpha chains and two beta chains. As to expression, red blood cells.

In terms of biological role, involved in oxygen transport from gills to the various peripheral tissues. This Hemitrygon akajei (Red stingray) protein is Hemoglobin subunit beta (HBB).